The chain runs to 278 residues: Extracellular metalloprotease MCYG_03238 (278 aa).

An N-terminal signal peptide occupies residues 1-19 (MRFSIVLSSIAALSSVAAA). Asn-52 carries N-linked (GlcNAc...) asparagine glycosylation. His-170 contributes to the Zn(2+) binding site. The active site involves Glu-171. His-174 is a Zn(2+) binding site. The cysteines at positions 209 and 255 are disulfide-linked.

It belongs to the peptidase M43B family.

The protein localises to the secreted. Secreted metalloproteinase that allows assimilation of proteinaceous substrates. Plays a pivotal role as a pathogenicity determinant during infections and contributes to the ability of the pathogen to persist within the mammalian host. In Arthroderma otae (strain ATCC MYA-4605 / CBS 113480) (Microsporum canis), this protein is Extracellular metalloprotease MCYG_03238.